A 286-amino-acid chain; its full sequence is Polyamine aminopropyltransferase (286 aa).

The PABS domain maps to 5 to 238; it reads TMWHETLHDQ…GIMTFAWATD (234 aa). An S-methyl-5'-thioadenosine-binding site is contributed by Gln33. His64 and Asp88 together coordinate spermidine. Residues Glu108 and 140-141 each bind S-methyl-5'-thioadenosine; that span reads DG. Residue Asp158 is the Proton acceptor of the active site. 158–161 serves as a coordination point for spermidine; it reads DCTD. Pro165 contacts S-methyl-5'-thioadenosine.

It belongs to the spermidine/spermine synthase family. In terms of assembly, homodimer or homotetramer.

It is found in the cytoplasm. The enzyme catalyses S-adenosyl 3-(methylsulfanyl)propylamine + putrescine = S-methyl-5'-thioadenosine + spermidine + H(+). The protein operates within amine and polyamine biosynthesis; spermidine biosynthesis; spermidine from putrescine: step 1/1. Functionally, catalyzes the irreversible transfer of a propylamine group from the amino donor S-adenosylmethioninamine (decarboxy-AdoMet) to putrescine (1,4-diaminobutane) to yield spermidine. This Salmonella typhi protein is Polyamine aminopropyltransferase.